The chain runs to 217 residues: ATP-dependent Clp protease proteolytic subunit (217 aa).

Ser-121 functions as the Nucleophile in the catalytic mechanism. His-146 is an active-site residue.

This sequence belongs to the peptidase S14 family. In terms of assembly, fourteen ClpP subunits assemble into 2 heptameric rings which stack back to back to give a disk-like structure with a central cavity, resembling the structure of eukaryotic proteasomes.

The protein localises to the cytoplasm. The enzyme catalyses Hydrolysis of proteins to small peptides in the presence of ATP and magnesium. alpha-casein is the usual test substrate. In the absence of ATP, only oligopeptides shorter than five residues are hydrolyzed (such as succinyl-Leu-Tyr-|-NHMec, and Leu-Tyr-Leu-|-Tyr-Trp, in which cleavage of the -Tyr-|-Leu- and -Tyr-|-Trp bonds also occurs).. Cleaves peptides in various proteins in a process that requires ATP hydrolysis. Has a chymotrypsin-like activity. Plays a major role in the degradation of misfolded proteins. This Burkholderia cenocepacia (strain HI2424) protein is ATP-dependent Clp protease proteolytic subunit.